The chain runs to 420 residues: MAQTLAQKILQAHTDDAVEQDGQIVQCRVSMVLANDITGPLAIKSFYGMGAKKVFDRTKIALVMDHFTPQKDIDSANQVLISRRFAEEQDIVHYYEGGDCGVEHTLLPEQGLVGPGDLVIGADSHTCTYGGIGAFATGMGSTDIAAGMALGETWLKVPSTIRVNISGDMPRWLRGKDLMLMLIGAIGVDGALYKALEFGGSVVDALSVEGRLSMANMAIEAGGKAGLFAVDAKTRTYCAEHKRPGVLENMAADSGAVYERVVDMNVTGKEPVVACPHLPSNVKPVSEVRDTAIQQVVIGSCTNGRISDMRDAAEVLRGRKVDKGVRCIVLPSTPTVWKQCLREGLIEVFMEAGCIVGPSTCGPCLGGHMGILGDGERAVATTNRNFRGRMGSLSSEVYLASPLVAAASAVTGYVAGPDQL.

Residues Cys301, Cys361, and Cys364 each coordinate [4Fe-4S] cluster.

This sequence belongs to the aconitase/IPM isomerase family. LeuC type 2 subfamily. In terms of assembly, heterodimer of LeuC and LeuD. The cofactor is [4Fe-4S] cluster.

The enzyme catalyses (2R,3S)-3-isopropylmalate = (2S)-2-isopropylmalate. The protein operates within amino-acid biosynthesis; L-leucine biosynthesis; L-leucine from 3-methyl-2-oxobutanoate: step 2/4. Functionally, catalyzes the isomerization between 2-isopropylmalate and 3-isopropylmalate, via the formation of 2-isopropylmaleate. This is 3-isopropylmalate dehydratase large subunit from Desulfovibrio desulfuricans (strain ATCC 27774 / DSM 6949 / MB).